The chain runs to 37 residues: Large ribosomal subunit protein bL36 (37 aa).

The protein belongs to the bacterial ribosomal protein bL36 family.

This Syntrophotalea carbinolica (strain DSM 2380 / NBRC 103641 / GraBd1) (Pelobacter carbinolicus) protein is Large ribosomal subunit protein bL36.